The following is a 395-amino-acid chain: Indoleacetate--lysine synthetase (395 aa).

This sequence belongs to the ATP-dependent AMP-binding enzyme family.

The enzyme catalyses (indol-3-yl)acetate + L-lysine + ATP = N(6)-[(indole-3-yl)acetyl]-L-lysine + ADP + phosphate + H(+). Its function is as follows. Conversion of IAA to IAA-lysine. The chain is Indoleacetate--lysine synthetase (iaaL) from Pseudomonas savastanoi (Pseudomonas syringae pv. savastanoi).